Here is a 302-residue protein sequence, read N- to C-terminus: Ubiquitin thioesterase OTU1 (302 aa).

Residues 5 to 83 (RCKARSGTQP…IVEEDTSKPS (79 aa)) are UBX-like. The region spanning 103–228 (LARRVVPADN…GIHYDPLERK (126 aa)) is the OTU domain. The cys-loop stretch occupies residues 108–114 (VPADNSC). Asp-111 is an active-site residue. Cys-114 functions as the Nucleophile in the catalytic mechanism. The variable-loop stretch occupies residues 167–177 (IRREETWGGAI). Positions 217–221 (YDGIH) are his-loop. Ile-220 is a substrate binding site. The active site involves His-221. The segment at 245–250 (DVVLAQ) is S2 site. Residues 272 to 296 (LRCMVCQKGLTGQVEAREHAKETGH) form a C2H2-type zinc finger. His-296 is an active-site residue.

It is found in the cytoplasm. The enzyme catalyses Thiol-dependent hydrolysis of ester, thioester, amide, peptide and isopeptide bonds formed by the C-terminal Gly of ubiquitin (a 76-residue protein attached to proteins as an intracellular targeting signal).. Functionally, hydrolase that can remove conjugated ubiquitin from proteins and participates in endoplasmic reticulum-associated degradation (ERAD) for misfolded lumenal proteins. May act by triming the ubiquitin chain on the associated substrate to facilitate their threading through the VCP/p97 pore. Ubiquitin moieties on substrates may present a steric impediment to the threading process when the substrate is transferred to the VCP pore and threaded through VCP's axial channel. Mediates deubiquitination of 'Lys-27'-, 'Lys-29'- and 'Lys-33'-linked polyubiquitin chains. Also able to hydrolyze 'Lys-11'-linked ubiquitin chains. Cleaves both polyubiquitin and di-ubiquitin. In Gallus gallus (Chicken), this protein is Ubiquitin thioesterase OTU1 (YOD1).